Reading from the N-terminus, the 612-residue chain is Dihydroxy-acid dehydratase (612 aa).

Residue Asp-81 participates in Mg(2+) binding. Cys-122 is a [2Fe-2S] cluster binding site. The Mg(2+) site is built by Asp-123 and Lys-124. N6-carboxylysine is present on Lys-124. Cys-193 serves as a coordination point for [2Fe-2S] cluster. Glu-489 is a Mg(2+) binding site. Ser-515 (proton acceptor) is an active-site residue.

This sequence belongs to the IlvD/Edd family. As to quaternary structure, homodimer. It depends on [2Fe-2S] cluster as a cofactor. Requires Mg(2+) as cofactor.

It catalyses the reaction (2R)-2,3-dihydroxy-3-methylbutanoate = 3-methyl-2-oxobutanoate + H2O. The catalysed reaction is (2R,3R)-2,3-dihydroxy-3-methylpentanoate = (S)-3-methyl-2-oxopentanoate + H2O. It functions in the pathway amino-acid biosynthesis; L-isoleucine biosynthesis; L-isoleucine from 2-oxobutanoate: step 3/4. Its pathway is amino-acid biosynthesis; L-valine biosynthesis; L-valine from pyruvate: step 3/4. Functionally, functions in the biosynthesis of branched-chain amino acids. Catalyzes the dehydration of (2R,3R)-2,3-dihydroxy-3-methylpentanoate (2,3-dihydroxy-3-methylvalerate) into 2-oxo-3-methylpentanoate (2-oxo-3-methylvalerate) and of (2R)-2,3-dihydroxy-3-methylbutanoate (2,3-dihydroxyisovalerate) into 2-oxo-3-methylbutanoate (2-oxoisovalerate), the penultimate precursor to L-isoleucine and L-valine, respectively. In Stenotrophomonas maltophilia (strain K279a), this protein is Dihydroxy-acid dehydratase.